Consider the following 209-residue polypeptide: Uridine kinase (209 aa).

Residue 12-19 (GGSGSGKT) participates in ATP binding.

It belongs to the uridine kinase family.

The protein resides in the cytoplasm. The enzyme catalyses uridine + ATP = UMP + ADP + H(+). The catalysed reaction is cytidine + ATP = CMP + ADP + H(+). It participates in pyrimidine metabolism; CTP biosynthesis via salvage pathway; CTP from cytidine: step 1/3. Its pathway is pyrimidine metabolism; UMP biosynthesis via salvage pathway; UMP from uridine: step 1/1. The sequence is that of Uridine kinase from Streptococcus mutans serotype c (strain ATCC 700610 / UA159).